The sequence spans 293 residues: Ribosomal protein L11 methyltransferase (293 aa).

The S-adenosyl-L-methionine site is built by T145, G166, D188, and N230.

This sequence belongs to the methyltransferase superfamily. PrmA family.

The protein localises to the cytoplasm. The catalysed reaction is L-lysyl-[protein] + 3 S-adenosyl-L-methionine = N(6),N(6),N(6)-trimethyl-L-lysyl-[protein] + 3 S-adenosyl-L-homocysteine + 3 H(+). Methylates ribosomal protein L11. This chain is Ribosomal protein L11 methyltransferase, found in Shewanella pealeana (strain ATCC 700345 / ANG-SQ1).